The primary structure comprises 153 residues: FAD synthase (153 aa).

Residues 9-10, 14-17, N92, and Y119 contribute to the ATP site; these read TF and HPGH.

It belongs to the archaeal FAD synthase family. Homodimer. Requires a divalent metal cation as cofactor.

It catalyses the reaction FMN + ATP + H(+) = FAD + diphosphate. It participates in cofactor biosynthesis; FAD biosynthesis; FAD from FMN: step 1/1. Functionally, catalyzes the transfer of the AMP portion of ATP to flavin mononucleotide (FMN) to produce flavin adenine dinucleotide (FAD) coenzyme. The sequence is that of FAD synthase from Methanosphaerula palustris (strain ATCC BAA-1556 / DSM 19958 / E1-9c).